Consider the following 386-residue polypeptide: ATP phosphoribosyltransferase regulatory subunit (386 aa).

Belongs to the class-II aminoacyl-tRNA synthetase family. HisZ subfamily. In terms of assembly, heteromultimer composed of HisG and HisZ subunits.

The protein localises to the cytoplasm. It participates in amino-acid biosynthesis; L-histidine biosynthesis; L-histidine from 5-phospho-alpha-D-ribose 1-diphosphate: step 1/9. Functionally, required for the first step of histidine biosynthesis. May allow the feedback regulation of ATP phosphoribosyltransferase activity by histidine. This Ralstonia nicotianae (strain ATCC BAA-1114 / GMI1000) (Ralstonia solanacearum) protein is ATP phosphoribosyltransferase regulatory subunit.